A 67-amino-acid polypeptide reads, in one-letter code: Large ribosomal subunit protein bL35 (67 aa).

This sequence belongs to the bacterial ribosomal protein bL35 family.

In Zymomonas mobilis subsp. mobilis (strain ATCC 31821 / ZM4 / CP4), this protein is Large ribosomal subunit protein bL35.